A 975-amino-acid chain; its full sequence is Glycine dehydrogenase (decarboxylating) (975 aa).

Lys-723 carries the post-translational modification N6-(pyridoxal phosphate)lysine.

It belongs to the GcvP family. In terms of assembly, the glycine cleavage system is composed of four proteins: P, T, L and H. Pyridoxal 5'-phosphate serves as cofactor.

It catalyses the reaction N(6)-[(R)-lipoyl]-L-lysyl-[glycine-cleavage complex H protein] + glycine + H(+) = N(6)-[(R)-S(8)-aminomethyldihydrolipoyl]-L-lysyl-[glycine-cleavage complex H protein] + CO2. Functionally, the glycine cleavage system catalyzes the degradation of glycine. The P protein binds the alpha-amino group of glycine through its pyridoxal phosphate cofactor; CO(2) is released and the remaining methylamine moiety is then transferred to the lipoamide cofactor of the H protein. The chain is Glycine dehydrogenase (decarboxylating) from Burkholderia vietnamiensis (strain G4 / LMG 22486) (Burkholderia cepacia (strain R1808)).